The sequence spans 445 residues: Gamma-glutamyl phosphate reductase (445 aa).

The protein belongs to the gamma-glutamyl phosphate reductase family.

It is found in the cytoplasm. It catalyses the reaction L-glutamate 5-semialdehyde + phosphate + NADP(+) = L-glutamyl 5-phosphate + NADPH + H(+). It functions in the pathway amino-acid biosynthesis; L-proline biosynthesis; L-glutamate 5-semialdehyde from L-glutamate: step 2/2. Functionally, catalyzes the NADPH-dependent reduction of L-glutamate 5-phosphate into L-glutamate 5-semialdehyde and phosphate. The product spontaneously undergoes cyclization to form 1-pyrroline-5-carboxylate. The chain is Gamma-glutamyl phosphate reductase from Synechococcus sp. (strain RCC307).